Reading from the N-terminus, the 689-residue chain is Glycine--tRNA ligase beta subunit (689 aa).

The protein belongs to the class-II aminoacyl-tRNA synthetase family. As to quaternary structure, tetramer of two alpha and two beta subunits.

Its subcellular location is the cytoplasm. It catalyses the reaction tRNA(Gly) + glycine + ATP = glycyl-tRNA(Gly) + AMP + diphosphate. The protein is Glycine--tRNA ligase beta subunit of Shigella flexneri serotype 5b (strain 8401).